Consider the following 324-residue polypeptide: MSTTPTIPTIKLNSGYEMPLVGFGCWKVTNATAADQIYNAIKTGYRLFDGAEDYGNEKEVGEGINRAIKEGLVKREELFITSKLWNNFHDPKNVETALNKTLSDLNLDYVDLFLIHFPIAFKFVPIEEKYPPGFYCGDGDNFHYEDVPLLDTWKALEKLVEAGKIKSIGISNFTGALIYDLIRGATIKPAVLQIEHHPYLQQPKLIEYVQKAGIAITGYSSFGPQSFLELESKRALNTPTLFEHETIKLIADKHGKSPAQVLLRWATQRNIAVIPKSNNPERLAQNLSVVDFDLTKDDLDNIAKLDIGLRFNDPWDWDNIPIFV.

Y54 acts as the Proton donor in catalysis. H116 contributes to the substrate binding site. NAD(+) is bound by residues 171 to 172 (SN), 220 to 229 (SSFGPQSFLE), and 276 to 286 (KSNNPERLAQN).

This sequence belongs to the aldo/keto reductase family.

It carries out the reaction xylitol + NAD(+) = D-xylose + NADH + H(+). The enzyme catalyses xylitol + NADP(+) = D-xylose + NADPH + H(+). Its pathway is carbohydrate metabolism; D-xylose degradation. Reduces D-xylose into xylitol. Has a preference for NADPH, but can also utilize NADH as cosubstrate. The polypeptide is NAD(P)H-dependent D-xylose reductase I,II (xyrA) (Candida tropicalis (Yeast)).